The following is a 345-amino-acid chain: 4-hydroxythreonine-4-phosphate dehydrogenase (345 aa).

Substrate-binding residues include H148 and T149. A divalent metal cation-binding residues include H182, H227, and H282. Residues K290, N299, and R308 each contribute to the substrate site.

It belongs to the PdxA family. In terms of assembly, homodimer. Zn(2+) serves as cofactor. It depends on Mg(2+) as a cofactor. Co(2+) is required as a cofactor.

Its subcellular location is the cytoplasm. The catalysed reaction is 4-(phosphooxy)-L-threonine + NAD(+) = 3-amino-2-oxopropyl phosphate + CO2 + NADH. It functions in the pathway cofactor biosynthesis; pyridoxine 5'-phosphate biosynthesis; pyridoxine 5'-phosphate from D-erythrose 4-phosphate: step 4/5. Functionally, catalyzes the NAD(P)-dependent oxidation of 4-(phosphooxy)-L-threonine (HTP) into 2-amino-3-oxo-4-(phosphooxy)butyric acid which spontaneously decarboxylates to form 3-amino-2-oxopropyl phosphate (AHAP). The chain is 4-hydroxythreonine-4-phosphate dehydrogenase from Bradyrhizobium diazoefficiens (strain JCM 10833 / BCRC 13528 / IAM 13628 / NBRC 14792 / USDA 110).